We begin with the raw amino-acid sequence, 204 residues long: Bcl-2-like protein 10 (204 aa).

The BH1 signature appears at L86–G105. Positions W118–D133 are required for Ca(2+) binding. Glycyl lysine isopeptide (Lys-Gly) (interchain with G-Cter in ubiquitin) cross-links involve residues K119, K120, and K128. A BH2 motif is present at residues W156 to C167. Residues L183–W200 traverse the membrane as a helical segment.

It belongs to the Bcl-2 family. As to quaternary structure, interacts with BAX. Interacts with BCL2 and BCL2L1/BCLX. Interacts with APAF1. Interacts with ITPR1, ITPR2 and ITPR3; the interaction with ITPR1 is increased in the presence of AHCLY1. Interacts with AHCYL1. Interacts with HIP1R (via ENTH and I/LWEQ domains). Interacts with CASP9. Interacts with BCL2L11/BIM. Interacts with BIK. Interacts with UBQLN4. Interacts with NME2/NM23-H2. Interacts with PMAIP1/NOXA. Interacts with TPX2. Interacts with UBQLN1; in the cytoplasm. Interacts (via BH1 domain) with BECN1. It depends on Ca(2+) as a cofactor. Monoubiquitinated by UBQLN1; results in stabilization of BCL2L10 protein abundance and in relocalization from mitochondria to cytoplasm. Widely expressed in adult tissues. Preferentially expressed in lung, liver and kidney.

The protein localises to the mitochondrion. It is found in the nucleus membrane. The protein resides in the endoplasmic reticulum. It localises to the cytoplasm. Its subcellular location is the cytoskeleton. The protein localises to the spindle. Promotes cell survival by suppressing apoptosis induced by BAX but not BAK. Increases binding of AHCYL1/IRBIT to ITPR1. Reduces ITPR1-mediated calcium release from the endoplasmic reticulum cooperatively with AHCYL1/IRBIT under normal cellular conditions. Under apoptotic stress conditions, dissociates from ITPR1 and is displaced from mitochondria-associated endoplasmic reticulum membranes, leading to increased Ca(2+) transfer to mitochondria which promotes apoptosis. Required for the correct formation of the microtubule organizing center during oocyte cell division, potentially via regulation of protein abundance and localization of other microtubule organizing center components such as AURKA and TPX2. This chain is Bcl-2-like protein 10, found in Homo sapiens (Human).